The sequence spans 328 residues: Renalase (328 aa).

FAD is bound by residues Ala-13, 32 to 33 (DK), Arg-40, and 56 to 57 (QY). Residues 57-61 (YFTAR) and 96-98 (SPD) each bind substrate. Ile-128 provides a ligand contact to FAD. Thr-185 provides a ligand contact to substrate. Residue Asp-302 participates in FAD binding. Arg-308 contributes to the substrate binding site. Val-309 is an FAD binding site.

It belongs to the bacterial renalase family. FAD serves as cofactor.

The catalysed reaction is 1,2-dihydro-beta-NAD + O2 + H(+) = H2O2 + NAD(+). It catalyses the reaction 1,2-dihydro-beta-NADP + O2 + H(+) = H2O2 + NADP(+). It carries out the reaction 1,6-dihydro-beta-NADP + O2 + H(+) = H2O2 + NADP(+). The enzyme catalyses 1,6-dihydro-beta-NAD + O2 + H(+) = H2O2 + NAD(+). Its function is as follows. Catalyzes the oxidation of the 1,2-dihydro- and 1,6-dihydro- isomeric forms of beta-NAD(P) back to beta-NAD(P)+. Has a preference for 1,2-dihydro-beta-NAD as substrate. May serve to protect primary metabolism dehydrogenases from inhibition by the 1,2-dihydro- and 1,6-dihydro-beta-NAD(P) isomers. The polypeptide is Renalase (Pseudomonas savastanoi pv. phaseolicola (strain 1448A / Race 6) (Pseudomonas syringae pv. phaseolicola (strain 1448A / Race 6))).